A 717-amino-acid chain; its full sequence is Transport/processing ATP-binding protein ComA (717 aa).

Residues 11–138 (QVDQMDCGVA…EEWTGVTLFM (128 aa)) enclose the Peptidase C39 domain. Cysteine 17 is an active-site residue. The next 6 helical transmembrane spans lie at 166–186 (GLIANIVLATLLVTVINIVGS), 205–225 (LGIISIGLVIVYIFQQILSYA), 237–257 (LSIDVILSYIKHVFHLPMSFF), 282–302 (TILSIFLDVSTVVIISLVLFS), 306–326 (NLFFMTLLALPIYTVIIFAFM), and 397–417 (VAHLLLNVGILWMGAVLVMDG). The 283-residue stretch at 168-450 (IANIVLATLL…IINLQTKLQT (283 aa)) folds into the ABC transmembrane type-1 domain. Residues 484 to 717 (MTFKQVHYKY…GGFYAHLVNS (234 aa)) enclose the ABC transporter domain. 517–524 (GISGSGKT) is an ATP binding site.

Belongs to the ABC transporter superfamily. Competence factor exporter (TC 3.A.1.112.1) family.

It localises to the cell membrane. In terms of biological role, required for induction of competence. Seems to transport the competence-stimulating peptide (CSP). The chain is Transport/processing ATP-binding protein ComA (comA) from Streptococcus pneumoniae serotype 4 (strain ATCC BAA-334 / TIGR4).